A 510-amino-acid polypeptide reads, in one-letter code: Probable serine/threonine-protein kinase 2 (510 aa).

One can recognise a Protein kinase domain in the interval 111 to 364 (YVLNKKIGKG…ALQALGHQWF (254 aa)). Residues 117 to 125 (IGKGSFSTA) and Lys-140 each bind ATP. The Proton acceptor role is filled by Asp-230. A disordered region spans residues 408–428 (NDDIYNNNNNNNQLDPNKNHK).

It belongs to the protein kinase superfamily. Ser/Thr protein kinase family.

The protein resides in the membrane. The catalysed reaction is L-seryl-[protein] + ATP = O-phospho-L-seryl-[protein] + ADP + H(+). It catalyses the reaction L-threonyl-[protein] + ATP = O-phospho-L-threonyl-[protein] + ADP + H(+). The chain is Probable serine/threonine-protein kinase 2 (PK2) from Plasmodium falciparum (isolate K1 / Thailand).